Here is a 106-residue protein sequence, read N- to C-terminus: Cytochrome c2 (106 aa).

Heme c contacts are provided by Cys19, Cys22, His23, and Met84.

It belongs to the cytochrome c family. Post-translationally, binds 1 heme c group covalently per subunit.

This chain is Cytochrome c2, found in Rhodopila globiformis (Rhodopseudomonas globiformis).